Consider the following 334-residue polypeptide: Tyrosine-protein kinase SRK3 (334 aa).

The SH2 domain maps to isoleucine 1–cysteine 42. The region spanning isoleucine 66–valine 321 is the Protein kinase domain. ATP-binding positions include leucine 72–valine 80 and lysine 94. The active-site Proton acceptor is the aspartate 186.

It belongs to the protein kinase superfamily. Tyr protein kinase family.

The protein resides in the cytoplasm. It carries out the reaction L-tyrosyl-[protein] + ATP = O-phospho-L-tyrosyl-[protein] + ADP + H(+). In Spongilla lacustris (Freshwater sponge), this protein is Tyrosine-protein kinase SRK3 (SRK3).